A 254-amino-acid chain; its full sequence is Imidazole glycerol phosphate synthase subunit HisF (254 aa).

Catalysis depends on residues D12 and D131.

The protein belongs to the HisA/HisF family. As to quaternary structure, heterodimer of HisH and HisF.

It localises to the cytoplasm. The catalysed reaction is 5-[(5-phospho-1-deoxy-D-ribulos-1-ylimino)methylamino]-1-(5-phospho-beta-D-ribosyl)imidazole-4-carboxamide + L-glutamine = D-erythro-1-(imidazol-4-yl)glycerol 3-phosphate + 5-amino-1-(5-phospho-beta-D-ribosyl)imidazole-4-carboxamide + L-glutamate + H(+). It participates in amino-acid biosynthesis; L-histidine biosynthesis; L-histidine from 5-phospho-alpha-D-ribose 1-diphosphate: step 5/9. In terms of biological role, IGPS catalyzes the conversion of PRFAR and glutamine to IGP, AICAR and glutamate. The HisF subunit catalyzes the cyclization activity that produces IGP and AICAR from PRFAR using the ammonia provided by the HisH subunit. This chain is Imidazole glycerol phosphate synthase subunit HisF, found in Leifsonia xyli subsp. xyli (strain CTCB07).